Reading from the N-terminus, the 354-residue chain is MEKYLIKMPIKSKANAVPEEKAVVKKGTPKMTGKVTKKDTPKELKDKENAGEDNTPKQTKGRPGRPAVKRKNLDNPDAKAEKKATEEENPPKRRSSRLTRSTRSMAEDGSPSPEKEKPEKLPFIKYKGAIKYYTENQDIAASADDVLQWVEKQKDEVVPMAFDMEWPFSFQTGPGKSAVIQICVDEKCCYIYQLTNLKKLPAVLVALINHPKVRLHGVNIKNDFRKLARDFPEVSAEPLIEKCVDLGLWCNEVCETGGRWSLERLTNFIAKKAMDKSKKVRMSKWHVIPLDENQLMYAAIDVYIGQVIYRELERREKAKIKNEAEFKENNGEAAFKAMKTLGETFLTKINEVTL.

Residues 1–120 (MEKYLIKMPI…PSPEKEKPEK (120 aa)) form a disordered region. A compositionally biased stretch (basic and acidic residues) spans 36-50 (TKKDTPKELKDKENA). Positions 59-70 (TKGRPGRPAVKR) are enriched in basic residues. Residues 71 to 91 (KNLDNPDAKAEKKATEEENPP) are compositionally biased toward basic and acidic residues. Residues Ser104, Ser110, and Ser112 each carry the phosphoserine modification. The region spanning 146–314 (VLQWVEKQKD…GQVIYRELER (169 aa)) is the 3'-5' exonuclease domain. 3 residues coordinate Mg(2+): Asp163, Glu165, and Asp301.

It belongs to the WRNexo family.

The protein resides in the nucleus. Has exonuclease activity on both single-stranded and duplex templates bearing overhangs, but not blunt ended duplex DNA, and cleaves in a 3'-5' direction. Essential for the formation of DNA replication focal centers. Has an important role in maintaining genome stability. In Drosophila yakuba (Fruit fly), this protein is 3'-5' exonuclease.